A 495-amino-acid polypeptide reads, in one-letter code: MFS transporter prlL (495 aa).

Positions 1-24 are disordered; that stretch reads MAQSFANEHDPAKRAEERGHVGTI. Residues 7–20 are compositionally biased toward basic and acidic residues; that stretch reads NEHDPAKRAEERGH. The next 11 helical transmembrane spans lie at 102–122, 130–150, 159–179, 189–209, 224–244, 292–312, 329–349, 356–376, 386–406, 418–438, and 449–469; these read IALMIFFLAYGLFEVPSNVLL, WIAILMFSWGAISMGLAGAHN, FLLGIFEAGLFPGLVYYLTFW, VAFILASATLAGAFGGAIAYA, WLFIIEGAPSCVSALFVLFFL, LWAHYLIYFGISTPFSSLSLF, LMTVPPYAVAYVVQILVSWSA, GLHSAASATVGACGFLASAVL, GCLIVAAAGAFACIPPLLGWL, LAIALNIGLGGAPGQIAGVWI, and PTGHWVNAGLLFFVAVACVAL.

This sequence belongs to the major facilitator superfamily.

It is found in the cell membrane. In terms of biological role, efflux pump that might be required for efficient secretion of pyrrolocin or other secondary metabolies produced by the pyrrolocin gene cluster. The chain is MFS transporter prlL from Fungal sp. (strain NRRL 50135).